Consider the following 703-residue polypeptide: Solute carrier family 28 member 3 (703 aa).

A compositionally biased stretch (basic and acidic residues) spans 1–19 (MSRADPGKNSEPSESKMSL). Positions 1-93 (MSRADPGKNS…DPEDDSEDEH (93 aa)) are disordered. At 1–117 (MSRADPGKNS…FCRKHRVVLR (117 aa)) the chain is on the cytoplasmic side. Residues 44 to 61 (QNTPGNSTVRNRVVQSGE) show a composition bias toward polar residues. The segment covering 63 to 72 (GHAKQDDRQI) has biased composition (basic and acidic residues). Residues 118-138 (STIWAVLLTGFLALVIAACAI) form a helical membrane-spanning segment. Over 139 to 143 (NFHRA) the chain is Extracellular. A helical transmembrane segment spans residues 144–164 (LPLFVITLVTIFFVIWDHLMA). The Cytoplasmic segment spans residues 165–188 (KYEQRIDDFLSPGRRLLDRHWFWL). A helical membrane pass occupies residues 189-209 (KWVVWSSLILAIILWLSLDTA). Residues 210–212 (KLG) lie on the Extracellular side of the membrane. Residues 213–234 (QQNLVSFGGLIMYLILLFLFSK) traverse the membrane as a helical segment. Over 235–242 (HPTRVYWR) the chain is Cytoplasmic. Residues 243–262 (PVFWGIGLQFLLGLLILRTR) form a helical membrane-spanning segment. Residues 263–299 (PGFVAFDWMGRQVQTFLGYTDTGARFVFGEKYTDHFF) lie on the Extracellular side of the membrane. A helical transmembrane segment spans residues 300-320 (AFKILPIVVFFSTVMSMLYYL). The Cytoplasmic segment spans residues 321–344 (GLMQWIIRKVGWLMLVTMGSSPIE). The helical intramembrane region spans 345-363 (SVVAAGNIFIGQTESPLLV). Residues 364 to 376 (QPYLPHVTKSELH) lie on the Cytoplasmic side of the membrane. Residues 377–399 (TIMTAGFATIAGSVLGAYISFGV) form a helical membrane-spanning segment. At 400–401 (SS) the chain is on the extracellular side. Residues 402 to 423 (THLLTASVMSAPAALAVAKLFW) traverse the membrane as a helical segment. Residues 424-458 (PETEKPKITLKSAMKMENGDSRNLLEAASQGASSS) lie on the Cytoplasmic side of the membrane. Residues 459–484 (IPLVANIAANLIAFLALLSFVNSALS) traverse the membrane as a helical segment. The Extracellular portion of the chain corresponds to 485–522 (WFGSMFNYPELSFELICSYIFMPFSFMMGVDWQDSFMV). Residues 523-542 (AKLIGYKTFFNEFVAYDHLS) constitute an intramembrane region (helical). Over 543–581 (KLINLRKAAGPKFVNGVQQYMSIRSETIATYALCGFANF) the chain is Extracellular. A helical transmembrane segment spans residues 582 to 592 (GSLGIVIGGLT). The Cytoplasmic portion of the chain corresponds to 593 to 605 (SIAPSRKRDIASG). The helical transmembrane segment at 606–628 (AMRALIAGTIACFMTACIAGILS) threads the bilayer. At 629–703 (DTPVDINCHH…LNCNWIPNKL (75 aa)) the chain is on the extracellular side.

Belongs to the concentrative nucleoside transporter (CNT) (TC 2.A.41) family. As to quaternary structure, homotrimer.

The protein resides in the cell membrane. The enzyme catalyses thymidine(out) + 2 Na(+)(out) = thymidine(in) + 2 Na(+)(in). It carries out the reaction cytidine(out) + 2 Na(+)(out) = cytidine(in) + 2 Na(+)(in). The catalysed reaction is uridine(out) + 2 Na(+)(out) = uridine(in) + 2 Na(+)(in). It catalyses the reaction adenosine(out) + 2 Na(+)(out) = adenosine(in) + 2 Na(+)(in). The enzyme catalyses guanosine(out) + 2 Na(+)(out) = guanosine(in) + 2 Na(+)(in). It carries out the reaction inosine(out) + 2 Na(+)(out) = inosine(in) + 2 Na(+)(in). Its function is as follows. Sodium-dependent, pyrimidine- and purine-selective. Involved in the homeostasis of endogenous nucleosides. Exhibits the transport characteristics of the nucleoside transport system cib or N3 subtype (N3/cib) (with marked transport of both thymidine and inosine). Employs a 2:1 sodium/nucleoside ratio. Also able to transport gemcitabine, 3'-azido-3'-deoxythymidine (AZT), ribavirin and 3-deazauridine. This chain is Solute carrier family 28 member 3 (Slc28a3), found in Mus musculus (Mouse).